The sequence spans 140 residues: Pro-vaccinia growth factor (140 aa).

An N-terminal signal peptide occupies residues 1–18 (MSMKYLMLLFAAMIIRSF). The Extracellular segment spans residues 19–100 (ADSGNAIETT…SENPNTTTSY (82 aa)). The N-linked (GlcNAc...) asparagine; by host glycan is linked to Asn34. Residues 41 to 81 (AIRLCGPEGDGYCLHGDCIHARDIDGMYCRCSHGYTGIRCQ) enclose the EGF-like domain. Disulfide bonds link Cys45-Cys58, Cys53-Cys69, and Cys71-Cys80. Asn95 carries N-linked (GlcNAc...) asparagine; by host glycosylation. The chain crosses the membrane as a helical span at residues 101–121 (IPSPGIVLVLVGIIIITCCSL). At 122–140 (SVYRFTRRTKLPIQDMVVP) the chain is on the cytoplasmic side.

The protein belongs to the orthopoxvirus OPG019 family. In terms of assembly, vaccinia growth factor interacts with host EGFR and promotes EGFR dimerization.

It localises to the host membrane. Its subcellular location is the secreted. Stimulates cellular proliferation (hyperplasia)and mobility around infected cells to promote rapid and efficient spread of infection. This effect is beneficial for virus replication in vivo, because poxviruses replicate possibly better in proliferating cells than in quiescent cells. Acts by binding host EGFR, inducing its dimerization, autophosphorylation and leading to activation of several cellular pathways regulating cell proliferation or cell survival. The activation by host EGFR of mitogen activated protein kinases (MAPK) and extracellular-signal regulated kinases (ERK) are essential for the positive effect of vaccinia growth factor on poxvirus virulence in vivo. This Vaccinia virus (strain L-IVP) (VACV) protein is Pro-vaccinia growth factor (OPG019).